The following is a 231-amino-acid chain: High-affinity zinc uptake system ATP-binding protein ZnuC (231 aa).

The 227-residue stretch at V4 to L230 folds into the ABC transporter domain.

It belongs to the ABC transporter superfamily. The complex is composed of two ATP-binding proteins (ZnuC), two transmembrane proteins (ZnuB) and a solute-binding protein (ZnuA).

It localises to the cell membrane. The enzyme catalyses Zn(2+)(out) + ATP(in) + H2O(in) = Zn(2+)(in) + ADP(in) + phosphate(in) + H(+)(in). In terms of biological role, part of the high-affinity ABC transporter complex ZnuABC involved in zinc import. Responsible for energy coupling to the transport system. ZnuABC-mediated zinc transport is required for comF expression and competence development. This is High-affinity zinc uptake system ATP-binding protein ZnuC (znuC) from Bacillus subtilis (strain 168).